The chain runs to 261 residues: Kallikrein-2 (261 aa).

The signal sequence occupies residues 1-18; sequence MWDLVLSIALSVGCTGAV. Positions 19-24 are cleaved as a propeptide — activation peptide; that stretch reads PLIQSR. The region spanning 25-258 is the Peptidase S1 domain; the sequence is IVGGWECEKH…YRKWIKDTIA (234 aa). 5 cysteine pairs are disulfide-bonded: cysteine 31/cysteine 173, cysteine 50/cysteine 66, cysteine 152/cysteine 219, cysteine 184/cysteine 198, and cysteine 209/cysteine 234. Histidine 65 serves as the catalytic Charge relay system. Asparagine 102 is a glycosylation site (N-linked (GlcNAc...) asparagine). Catalysis depends on aspartate 120, which acts as the Charge relay system. Serine 213 serves as the catalytic Charge relay system.

The protein belongs to the peptidase S1 family. Kallikrein subfamily.

The enzyme catalyses Preferential cleavage of Arg-|-Xaa bonds in small molecule substrates. Highly selective action to release kallidin (lysyl-bradykinin) from kininogen involves hydrolysis of Met-|-Xaa or Leu-|-Xaa.. Glandular kallikreins cleave Met-Lys and Arg-Ser bonds in kininogen to release Lys-bradykinin. In Homo sapiens (Human), this protein is Kallikrein-2 (KLK2).